Here is a 418-residue protein sequence, read N- to C-terminus: Tryptophan synthase beta chain (418 aa).

The segment covering 1 to 18 (MTSTLPNASTPDPASLQP) has biased composition (polar residues). The tract at residues 1-23 (MTSTLPNASTPDPASLQPSVRPG) is disordered. Residue K111 is modified to N6-(pyridoxal phosphate)lysine.

This sequence belongs to the TrpB family. As to quaternary structure, tetramer of two alpha and two beta chains. It depends on pyridoxal 5'-phosphate as a cofactor.

It carries out the reaction (1S,2R)-1-C-(indol-3-yl)glycerol 3-phosphate + L-serine = D-glyceraldehyde 3-phosphate + L-tryptophan + H2O. It functions in the pathway amino-acid biosynthesis; L-tryptophan biosynthesis; L-tryptophan from chorismate: step 5/5. In terms of biological role, the beta subunit is responsible for the synthesis of L-tryptophan from indole and L-serine. This Parasynechococcus marenigrum (strain WH8102) protein is Tryptophan synthase beta chain.